Consider the following 237-residue polypeptide: Ribosomal RNA small subunit methyltransferase G (237 aa).

S-adenosyl-L-methionine-binding positions include Gly78, Phe83, 129–130 (AE), and Arg148. The interval 216–237 (SKKKETPNKYPRKAGTPNKKPL) is disordered.

The protein belongs to the methyltransferase superfamily. RNA methyltransferase RsmG family.

The protein resides in the cytoplasm. Its function is as follows. Specifically methylates the N7 position of a guanine in 16S rRNA. The chain is Ribosomal RNA small subunit methyltransferase G from Streptococcus agalactiae serotype V (strain ATCC BAA-611 / 2603 V/R).